A 341-amino-acid chain; its full sequence is tRNA N6-adenosine threonylcarbamoyltransferase (341 aa).

Fe cation contacts are provided by His-120 and His-124. Residues 142–146 (VVSGG), Asp-175, Gly-188, Asp-192, and Asn-281 each bind substrate. Fe cation is bound at residue Asp-310.

The protein belongs to the KAE1 / TsaD family. The cofactor is Fe(2+).

The protein resides in the cytoplasm. It catalyses the reaction L-threonylcarbamoyladenylate + adenosine(37) in tRNA = N(6)-L-threonylcarbamoyladenosine(37) in tRNA + AMP + H(+). In terms of biological role, required for the formation of a threonylcarbamoyl group on adenosine at position 37 (t(6)A37) in tRNAs that read codons beginning with adenine. Is involved in the transfer of the threonylcarbamoyl moiety of threonylcarbamoyl-AMP (TC-AMP) to the N6 group of A37, together with TsaE and TsaB. TsaD likely plays a direct catalytic role in this reaction. The protein is tRNA N6-adenosine threonylcarbamoyltransferase of Anoxybacillus flavithermus (strain DSM 21510 / WK1).